We begin with the raw amino-acid sequence, 257 residues long: ECF RNA polymerase sigma factor SigE (257 aa).

Positions 87–153 (LVRQHADRVY…FLDMVRRRAR (67 aa)) are sigma-70 factor domain-2. Residues 111-114 (DLTQ) carry the Polymerase core binding motif. Residues 186–236 (LQAALASLPPEFRAAVVLCDIEGLSYEEIGATLGVKLGTVRSRIHRGRQAL) are sigma-70 factor domain-4. A DNA-binding region (H-T-H motif) is located at residues 211–230 (YEEIGATLGVKLGTVRSRIH).

The protein belongs to the sigma-70 factor family. ECF subfamily. As to quaternary structure, interacts transiently with the RNA polymerase catalytic core formed by RpoA, RpoB, RpoC and RpoZ (2 alpha, 1 beta, 1 beta' and 1 omega subunit) to form the RNA polymerase holoenzyme that can initiate transcription. Interacts (via sigma-70 factor domain 4) with cognate anti-sigma-E factor RseA under reducing conditions, which stops the sigma factor from functioning.

Sigma factors are initiation factors that promote the attachment of RNA polymerase to specific initiation sites and are then released. Extracytoplasmic function (ECF) sigma factors are held in an inactive form by an anti-sigma factor until released. Responds to surface stress (H(2)O(2)). This chain is ECF RNA polymerase sigma factor SigE (sigE), found in Mycobacterium tuberculosis (strain ATCC 35801 / TMC 107 / Erdman).